The chain runs to 662 residues: UvrABC system protein B (662 aa).

In terms of domain architecture, Helicase ATP-binding spans 31–188 (DNIEGGEKAQ…NDLVDIQFER (158 aa)). 44-51 (GATGTGKT) contacts ATP. Positions 97-120 (YYDYYQPEAYVPSSDTYIEKDSSV) match the Beta-hairpin motif. Positions 435–601 (QIDDLLGEIN…TIKKEIRDLI (167 aa)) constitute a Helicase C-terminal domain. In terms of domain architecture, UVR spans 626-661 (KELVKKLEKQMQEAVEVLDFELAAQIRDMMLEVKAL).

This sequence belongs to the UvrB family. Forms a heterotetramer with UvrA during the search for lesions. Interacts with UvrC in an incision complex.

Its subcellular location is the cytoplasm. Its function is as follows. The UvrABC repair system catalyzes the recognition and processing of DNA lesions. A damage recognition complex composed of 2 UvrA and 2 UvrB subunits scans DNA for abnormalities. Upon binding of the UvrA(2)B(2) complex to a putative damaged site, the DNA wraps around one UvrB monomer. DNA wrap is dependent on ATP binding by UvrB and probably causes local melting of the DNA helix, facilitating insertion of UvrB beta-hairpin between the DNA strands. Then UvrB probes one DNA strand for the presence of a lesion. If a lesion is found the UvrA subunits dissociate and the UvrB-DNA preincision complex is formed. This complex is subsequently bound by UvrC and the second UvrB is released. If no lesion is found, the DNA wraps around the other UvrB subunit that will check the other stand for damage. The chain is UvrABC system protein B from Streptococcus pneumoniae (strain P1031).